A 282-amino-acid polypeptide reads, in one-letter code: Hydrogenase expression/formation protein HoxQ (282 aa).

This sequence belongs to the HupH/HyaF family.

This is Hydrogenase expression/formation protein HoxQ (hoxQ) from Cupriavidus necator (strain ATCC 17699 / DSM 428 / KCTC 22496 / NCIMB 10442 / H16 / Stanier 337) (Ralstonia eutropha).